Reading from the N-terminus, the 373-residue chain is Innexin shaking-B (373 aa).

The Cytoplasmic portion of the chain corresponds to M1–S21. A helical transmembrane segment spans residues P22–V42. Over T43–K106 the chain is Extracellular. A helical membrane pass occupies residues I107–T127. Topologically, residues P128–N176 are cytoplasmic. The helical transmembrane segment at W177 to L199 threads the bilayer. The Extracellular segment spans residues M200–K268. Residues I269–F289 form a helical membrane-spanning segment. Over Y290–A373 the chain is Cytoplasmic.

The protein belongs to the pannexin family. In terms of assembly, monomer.

The protein resides in the cell membrane. It localises to the cell junction. Its subcellular location is the gap junction. In terms of biological role, structural component of the gap junctions at electrical synapses in distal and mid-depth levels in the lamina. The chain is Innexin shaking-B from Anopheles gambiae (African malaria mosquito).